The chain runs to 174 residues: 3-hydroxyanthranilate 3,4-dioxygenase (174 aa).

Arg47 serves as a coordination point for O2. His51, Glu57, and His95 together coordinate Fe cation. Glu57 is a substrate binding site. 2 residues coordinate substrate: Arg99 and Glu110. Positions 125, 128, 162, and 165 each coordinate Fe cation.

The protein belongs to the 3-HAO family. Homodimer. The cofactor is Fe(2+).

The catalysed reaction is 3-hydroxyanthranilate + O2 = (2Z,4Z)-2-amino-3-carboxymuconate 6-semialdehyde. It participates in cofactor biosynthesis; NAD(+) biosynthesis; quinolinate from L-kynurenine: step 3/3. Catalyzes the oxidative ring opening of 3-hydroxyanthranilate to 2-amino-3-carboxymuconate semialdehyde, which spontaneously cyclizes to quinolinate. The chain is 3-hydroxyanthranilate 3,4-dioxygenase from Paraburkholderia phytofirmans (strain DSM 17436 / LMG 22146 / PsJN) (Burkholderia phytofirmans).